Reading from the N-terminus, the 135-residue chain is Ribonuclease P protein component (135 aa).

Belongs to the RnpA family. Consists of a catalytic RNA component (M1 or rnpB) and a protein subunit.

The catalysed reaction is Endonucleolytic cleavage of RNA, removing 5'-extranucleotides from tRNA precursor.. Functionally, RNaseP catalyzes the removal of the 5'-leader sequence from pre-tRNA to produce the mature 5'-terminus. It can also cleave other RNA substrates such as 4.5S RNA. The protein component plays an auxiliary but essential role in vivo by binding to the 5'-leader sequence and broadening the substrate specificity of the ribozyme. This chain is Ribonuclease P protein component, found in Xylella fastidiosa (strain Temecula1 / ATCC 700964).